The primary structure comprises 275 residues: Putative protein A464R (275 aa).

The 125-residue stretch at 51-175 folds into the RNase III domain; the sequence is KEDVEYLIGM…LMGAIYFDLG (125 aa). A DRBM domain is found at 201–269; that stretch reads NYKDRLLKHT…SKIALHTMGV (69 aa).

Belongs to the ribonuclease III family.

In Chlorella (PBCV-1), this protein is Putative protein A464R.